The sequence spans 610 residues: DNA mismatch repair protein MutL (610 aa).

Positions 351 to 406 (GQRPQAPWSAETSPSRPYQPAPAFSERPQASFDGLSTPTARAEPQFSPDPVSPGLA) are disordered.

This sequence belongs to the DNA mismatch repair MutL/HexB family.

This protein is involved in the repair of mismatches in DNA. It is required for dam-dependent methyl-directed DNA mismatch repair. May act as a 'molecular matchmaker', a protein that promotes the formation of a stable complex between two or more DNA-binding proteins in an ATP-dependent manner without itself being part of a final effector complex. The polypeptide is DNA mismatch repair protein MutL (Rhizobium etli (strain ATCC 51251 / DSM 11541 / JCM 21823 / NBRC 15573 / CFN 42)).